A 151-amino-acid polypeptide reads, in one-letter code: uncharacterized protein (151 aa).

The region spanning 6 to 143 (MKTLSAGIIF…QWQYVMGPSL (138 aa)) is the Nudix hydrolase domain.

This is an uncharacterized protein from Escherichia coli (Bacteriophage T4).